The primary structure comprises 243 residues: Protein S40-7 (243 aa).

2 disordered regions span residues 1-68 (MNKN…KSGL) and 107-143 (SSTA…ERLP). A compositionally biased stretch (polar residues) spans 10 to 20 (SSPSSLATISD). Residues 22 to 32 (ADGELNEDDIF) are compositionally biased toward acidic residues. Residues 47–67 (PVSSPAKQQTPARQLQRSKSG) are compositionally biased toward polar residues.

The protein belongs to the senescence regulator S40 family.

It localises to the cytoplasm. This is Protein S40-7 from Arabidopsis thaliana (Mouse-ear cress).